Reading from the N-terminus, the 182-residue chain is Nuclear cap-binding protein subunit 2 (182 aa).

MRNA-binding positions include tyrosine 13, tyrosine 35, 104-108, 115-119, and 125-126; these read RADLD, RQYGR, and QV. One can recognise an RRM domain in the interval 32–110; sequence NCVYVGNLSF…RIIRADLDHG (79 aa). The interval 114-182 is disordered; that stretch reads GRQYGRGASG…NPRYNRWKKN (69 aa). The span at 126–136 shows a compositional bias: basic and acidic residues; the sequence is VRDEMREEFDP. A compositionally biased stretch (polar residues) spans 145–175; that stretch reads RQPTSSRQLANYSGISSAPLGSSLELQSNPR.

This sequence belongs to the RRM NCBP2 family. In terms of assembly, component of the nuclear cap-binding complex (CBC), a heterodimer composed of cbc1 and cbc2 that interacts with capped RNAs.

It is found in the cytoplasm. The protein resides in the perinuclear region. The protein localises to the nucleus. In terms of biological role, component of the CBC complex, which binds co-transcriptionally to the 5' cap of pre-mRNAs and is involved in maturation, export and degradation of nuclear mRNAs. The protein is Nuclear cap-binding protein subunit 2 (cbc2) of Schizosaccharomyces pombe (strain 972 / ATCC 24843) (Fission yeast).